The primary structure comprises 501 residues: ATP synthase subunit alpha (501 aa).

An ATP-binding site is contributed by 169–176 (GDRQTGKT).

It belongs to the ATPase alpha/beta chains family. In terms of assembly, F-type ATPases have 2 components, CF(1) - the catalytic core - and CF(0) - the membrane proton channel. CF(1) has five subunits: alpha(3), beta(3), gamma(1), delta(1), epsilon(1). CF(0) has three main subunits: a(1), b(2) and c(9-12). The alpha and beta chains form an alternating ring which encloses part of the gamma chain. CF(1) is attached to CF(0) by a central stalk formed by the gamma and epsilon chains, while a peripheral stalk is formed by the delta and b chains.

Its subcellular location is the cell membrane. It catalyses the reaction ATP + H2O + 4 H(+)(in) = ADP + phosphate + 5 H(+)(out). In terms of biological role, produces ATP from ADP in the presence of a proton gradient across the membrane. The alpha chain is a regulatory subunit. The chain is ATP synthase subunit alpha from Streptococcus uberis (strain ATCC BAA-854 / 0140J).